The following is a 170-amino-acid chain: Peptide deformylase (170 aa).

Fe cation is bound by residues C91 and H133. The active site involves E134. H137 contributes to the Fe cation binding site.

This sequence belongs to the polypeptide deformylase family. Requires Fe(2+) as cofactor.

The enzyme catalyses N-terminal N-formyl-L-methionyl-[peptide] + H2O = N-terminal L-methionyl-[peptide] + formate. Removes the formyl group from the N-terminal Met of newly synthesized proteins. Requires at least a dipeptide for an efficient rate of reaction. N-terminal L-methionine is a prerequisite for activity but the enzyme has broad specificity at other positions. This Pasteurella multocida (strain Pm70) protein is Peptide deformylase.